A 246-amino-acid chain; its full sequence is tRNA pseudouridine synthase A (246 aa).

Asp-52 acts as the Nucleophile in catalysis. Position 110 (Tyr-110) interacts with substrate.

It belongs to the tRNA pseudouridine synthase TruA family. In terms of assembly, homodimer.

The catalysed reaction is uridine(38/39/40) in tRNA = pseudouridine(38/39/40) in tRNA. In terms of biological role, formation of pseudouridine at positions 38, 39 and 40 in the anticodon stem and loop of transfer RNAs. This chain is tRNA pseudouridine synthase A, found in Exiguobacterium sp. (strain ATCC BAA-1283 / AT1b).